Reading from the N-terminus, the 258-residue chain is NAD kinase (258 aa).

D45 functions as the Proton acceptor in the catalytic mechanism. NAD(+) contacts are provided by residues 45–46 (DG), 117–118 (NE), D147, A155, 158–163 (TAYNYS), and A182.

This sequence belongs to the NAD kinase family. A divalent metal cation serves as cofactor.

It localises to the cytoplasm. It catalyses the reaction NAD(+) + ATP = ADP + NADP(+) + H(+). Involved in the regulation of the intracellular balance of NAD and NADP, and is a key enzyme in the biosynthesis of NADP. Catalyzes specifically the phosphorylation on 2'-hydroxyl of the adenosine moiety of NAD to yield NADP. The protein is NAD kinase of Xanthomonas oryzae pv. oryzae (strain MAFF 311018).